We begin with the raw amino-acid sequence, 431 residues long: Enolase (431 aa).

Gln-167 contacts (2R)-2-phosphoglycerate. The active-site Proton donor is Glu-209. Asp-246, Glu-289, and Asp-316 together coordinate Mg(2+). 4 residues coordinate (2R)-2-phosphoglycerate: Lys-341, Arg-370, Ser-371, and Lys-392. Lys-341 acts as the Proton acceptor in catalysis.

Belongs to the enolase family. As to quaternary structure, component of the RNA degradosome, a multiprotein complex involved in RNA processing and mRNA degradation. Mg(2+) serves as cofactor.

Its subcellular location is the cytoplasm. It localises to the secreted. It is found in the cell surface. The enzyme catalyses (2R)-2-phosphoglycerate = phosphoenolpyruvate + H2O. The protein operates within carbohydrate degradation; glycolysis; pyruvate from D-glyceraldehyde 3-phosphate: step 4/5. Catalyzes the reversible conversion of 2-phosphoglycerate (2-PG) into phosphoenolpyruvate (PEP). It is essential for the degradation of carbohydrates via glycolysis. This chain is Enolase, found in Shewanella oneidensis (strain ATCC 700550 / JCM 31522 / CIP 106686 / LMG 19005 / NCIMB 14063 / MR-1).